Consider the following 321-residue polypeptide: Annexin D3 (321 aa).

Ala-2 is modified (N-acetylalanine). 4 Annexin repeats span residues 11-82 (PSPA…SWTY), 83-159 (DPAE…TLAS), 171-243 (EVAT…VAIF), and 247-318 (TPEK…TLLG). Ca(2+) is bound by residues Gly-26, Gly-28, and Glu-68. Residue Thr-117 is modified to Phosphothreonine. Ca(2+) is bound by residues Ile-260 and Gly-264. A Phosphotyrosine modification is found at Tyr-289. Asp-304 provides a ligand contact to Ca(2+).

It belongs to the annexin (TC 1.A.31.1) family. In terms of tissue distribution, expressed mainly in roots and flowers. Lower in stems and leaves.

The polypeptide is Annexin D3 (ANN3) (Arabidopsis thaliana (Mouse-ear cress)).